Reading from the N-terminus, the 213-residue chain is dTTP/UTP pyrophosphatase (213 aa).

Asp-92 (proton acceptor) is an active-site residue.

This sequence belongs to the Maf family. YhdE subfamily. It depends on a divalent metal cation as a cofactor.

The protein resides in the cytoplasm. The enzyme catalyses dTTP + H2O = dTMP + diphosphate + H(+). The catalysed reaction is UTP + H2O = UMP + diphosphate + H(+). Nucleoside triphosphate pyrophosphatase that hydrolyzes dTTP and UTP. May have a dual role in cell division arrest and in preventing the incorporation of modified nucleotides into cellular nucleic acids. In Granulibacter bethesdensis (strain ATCC BAA-1260 / CGDNIH1), this protein is dTTP/UTP pyrophosphatase.